Reading from the N-terminus, the 289-residue chain is Elongation factor Ts (289 aa).

Residues 82-85 (TDFL) are involved in Mg(2+) ion dislocation from EF-Tu.

This sequence belongs to the EF-Ts family.

The protein resides in the cytoplasm. Its function is as follows. Associates with the EF-Tu.GDP complex and induces the exchange of GDP to GTP. It remains bound to the aminoacyl-tRNA.EF-Tu.GTP complex up to the GTP hydrolysis stage on the ribosome. This is Elongation factor Ts from Pseudomonas paraeruginosa (strain DSM 24068 / PA7) (Pseudomonas aeruginosa (strain PA7)).